Reading from the N-terminus, the 214-residue chain is 3,4-dihydroxy-2-butanone 4-phosphate synthase (214 aa).

Residues 37–38 (RE), Asp-42, 150–154 (RRGHT), and Glu-174 each bind D-ribulose 5-phosphate. Glu-38 is a binding site for Mg(2+). Residue His-153 participates in Mg(2+) binding.

The protein belongs to the DHBP synthase family. In terms of assembly, homodimer. Requires Mg(2+) as cofactor. It depends on Mn(2+) as a cofactor.

It carries out the reaction D-ribulose 5-phosphate = (2S)-2-hydroxy-3-oxobutyl phosphate + formate + H(+). It participates in cofactor biosynthesis; riboflavin biosynthesis; 2-hydroxy-3-oxobutyl phosphate from D-ribulose 5-phosphate: step 1/1. Catalyzes the conversion of D-ribulose 5-phosphate to formate and 3,4-dihydroxy-2-butanone 4-phosphate. In Desulfotalea psychrophila (strain LSv54 / DSM 12343), this protein is 3,4-dihydroxy-2-butanone 4-phosphate synthase.